The sequence spans 103 residues: Non-histone chromosomal protein HMG-14B (103 aa).

A disordered region spans residues 1-103; the sequence is MPKRKVAASR…AVEKEEVKSE (103 aa). The span at 29 to 50 shows a compositional bias: basic and acidic residues; the sequence is VPDKAEPKAKALAAKDKSENKK. Basic residues predominate over residues 51 to 60; that stretch reads AQSKGKKGPK. The segment covering 94–103 has biased composition (basic and acidic residues); that stretch reads AVEKEEVKSE.

Belongs to the HMGN family.

It localises to the nucleus. In terms of biological role, binds to the inner side of the nucleosomal DNA thus altering the interaction between the DNA and the histone octamer. May be involved in the process which maintains transcribable genes in a unique chromatin conformation. This chain is Non-histone chromosomal protein HMG-14B (HMG14), found in Gallus gallus (Chicken).